Reading from the N-terminus, the 175-residue chain is MYLTQDLELFHEYTVTQLLFKDVKNATELRKMAVNGEIKGALINPSMVVDAFQILVATNKAVHLHKIGKMKTRSLYSEIIFNLSPTNNISEAFKRFGISDSDTAVHIVLVHNKEETLNIDDIISKVDGQQIDVGQVSEMTDTAKIKKLYKITPQEDKCGTLLDAVVCRMAIKDVA.

Belongs to the CGI121/TPRKB family. As to quaternary structure, component of the EKC/KEOPS complex.

The protein localises to the cytoplasm. It localises to the cytosol. Its subcellular location is the nucleus. Component of the EKC/KEOPS complex that is required for the formation of a threonylcarbamoyl group on adenosine at position 37 (t(6)A37) in tRNAs that read codons beginning with adenine. The complex is probably involved in the transfer of the threonylcarbamoyl moiety of threonylcarbamoyl-AMP (TC-AMP) to the N6 group of A37. Tprkb acts as an allosteric effector that regulates the t(6)A activity of the complex. The polypeptide is EKC/KEOPS complex subunit TPRKB (Danio rerio (Zebrafish)).